A 305-amino-acid polypeptide reads, in one-letter code: 4-diphosphocytidyl-2-C-methyl-D-erythritol kinase (305 aa).

K17 is an active-site residue. 111 to 121 (PVASGIGGGSA) provides a ligand contact to ATP. D154 is a catalytic residue.

It belongs to the GHMP kinase family. IspE subfamily.

It catalyses the reaction 4-CDP-2-C-methyl-D-erythritol + ATP = 4-CDP-2-C-methyl-D-erythritol 2-phosphate + ADP + H(+). The protein operates within isoprenoid biosynthesis; isopentenyl diphosphate biosynthesis via DXP pathway; isopentenyl diphosphate from 1-deoxy-D-xylulose 5-phosphate: step 3/6. Its function is as follows. Catalyzes the phosphorylation of the position 2 hydroxy group of 4-diphosphocytidyl-2C-methyl-D-erythritol. This Gluconacetobacter diazotrophicus (strain ATCC 49037 / DSM 5601 / CCUG 37298 / CIP 103539 / LMG 7603 / PAl5) protein is 4-diphosphocytidyl-2-C-methyl-D-erythritol kinase.